We begin with the raw amino-acid sequence, 317 residues long: Glycine--tRNA ligase alpha subunit (317 aa).

The protein belongs to the class-II aminoacyl-tRNA synthetase family. In terms of assembly, tetramer of two alpha and two beta subunits.

It localises to the cytoplasm. The enzyme catalyses tRNA(Gly) + glycine + ATP = glycyl-tRNA(Gly) + AMP + diphosphate. The sequence is that of Glycine--tRNA ligase alpha subunit from Cupriavidus metallidurans (strain ATCC 43123 / DSM 2839 / NBRC 102507 / CH34) (Ralstonia metallidurans).